The chain runs to 263 residues: MFVKSETLELKEEEEVLMLLGSASPASATLTPMSSSADEEEDEELRRPGSARGQRGAEAEQGVQGSPASGAGGCRPGRLLGLMHECKRRPSRSRAVSRGAKTAETVQRIKKTRRLKANNRERNRMHNLNAALDALREVLPTFPEDAKLTKIETLRFAHNYIWALTETLRLADHCAGAGGLQGALFTEAVLLSPGAALGASGDSPSPPSSWSCTNSPASSSNSTSPYSCTLSPASPGSDVDYWQPPPPEKHRYAPHLPLARDCI.

The segment at 20–76 is disordered; that stretch reads LGSASPASATLTPMSSSADEEEDEELRRPGSARGQRGAEAEQGVQGSPASGAGGCRP. Residues 24–36 are compositionally biased toward polar residues; sequence SPASATLTPMSSS. The bHLH domain maps to 112-164; that stretch reads TRRLKANNRERNRMHNLNAALDALREVLPTFPEDAKLTKIETLRFAHNYIWAL. Residues 197–231 show a composition bias toward low complexity; the sequence is LGASGDSPSPPSSWSCTNSPASSSNSTSPYSCTLS. The interval 197–253 is disordered; it reads LGASGDSPSPPSSWSCTNSPASSSNSTSPYSCTLSPASPGSDVDYWQPPPPEKHRYA.

In terms of assembly, efficient DNA binding requires dimerization with another bHLH protein.

It localises to the nucleus. In terms of biological role, transcriptional regulator. Involved in neuronal differentiation. Activates transcription by binding to the E box (5'-CANNTG-3'). The polypeptide is Neurogenin-2 (Neurog2) (Mus musculus (Mouse)).